Reading from the N-terminus, the 56-residue chain is DTECVCTKELHRVCGSDGVTYDNECLATCHGASVAHDHACEGHEEHHVDEHGEDHD.

The Kazal-like domain occupies 1–42 (DTECVCTKELHRVCGSDGVTYDNECLATCHGASVAHDHACEG). 3 disulfides stabilise this stretch: cysteine 4/cysteine 29, cysteine 6/cysteine 25, and cysteine 14/cysteine 40.

In terms of biological role, proteinase inhibitor. Blocks the activity of trypsin, plasmin and sperm acrosin. The sequence is that of Bdellin B-3 from Hirudo medicinalis (Medicinal leech).